Consider the following 363-residue polypeptide: Anhydro-N-acetylmuramic acid kinase (363 aa).

9 to 16 (GTSLDGID) is an ATP binding site.

The protein belongs to the anhydro-N-acetylmuramic acid kinase family.

It catalyses the reaction 1,6-anhydro-N-acetyl-beta-muramate + ATP + H2O = N-acetyl-D-muramate 6-phosphate + ADP + H(+). Its pathway is amino-sugar metabolism; 1,6-anhydro-N-acetylmuramate degradation. It participates in cell wall biogenesis; peptidoglycan recycling. Its function is as follows. Catalyzes the specific phosphorylation of 1,6-anhydro-N-acetylmuramic acid (anhMurNAc) with the simultaneous cleavage of the 1,6-anhydro ring, generating MurNAc-6-P. Is required for the utilization of anhMurNAc either imported from the medium or derived from its own cell wall murein, and thus plays a role in cell wall recycling. The chain is Anhydro-N-acetylmuramic acid kinase from Nitrosomonas europaea (strain ATCC 19718 / CIP 103999 / KCTC 2705 / NBRC 14298).